Reading from the N-terminus, the 1073-residue chain is Receptor-type guanylate cyclase gcy-23 (1073 aa).

A signal peptide spans 1–15; sequence MRRELFIFLLLLGEC. The Extracellular segment spans residues 16–458; the sequence is ANVKVKVGHI…FRNEKCDYTT (443 aa). Residue N336 is glycosylated (N-linked (GlcNAc...) asparagine). A helical transmembrane segment spans residues 459–479; that stretch reads LIIGGCIVLLIILLIICFFIL. The Cytoplasmic segment spans residues 480 to 1073; the sequence is SRVCENRALA…QQQNFSQLGI (594 aa). Positions 508–808 constitute a Protein kinase domain; it reads MKSMLSIGSS…RVRLNTENYL (301 aa). The stretch at 813-844 forms a coiled coil; it reads SLVDQMMRMMEQYANNLEKLVAERTGMLEEAN. The Guanylate cyclase domain maps to 878-1008; the sequence is TVMFSDIVGF…DTVNVASRME (131 aa). Mg(2+) is bound by residues D883, I884, and D927.

This sequence belongs to the adenylyl cyclase class-4/guanylyl cyclase family. As to expression, expressed specifically in AFD sensory neurons.

It is found in the cell membrane. It localises to the cell projection. Its subcellular location is the cilium. It carries out the reaction GTP = 3',5'-cyclic GMP + diphosphate. Guanylate cyclase involved in the production of the second messenger cGMP. Regulates thermotaxis responses in AFD sensory neurons. May regulate AFD neuronal activity such as calcium responses to temperature gradients. This chain is Receptor-type guanylate cyclase gcy-23, found in Caenorhabditis elegans.